A 99-amino-acid polypeptide reads, in one-letter code: Nucleoid-associated protein SZO_16661 (99 aa).

This sequence belongs to the YbaB/EbfC family. In terms of assembly, homodimer.

Its subcellular location is the cytoplasm. It localises to the nucleoid. Binds to DNA and alters its conformation. May be involved in regulation of gene expression, nucleoid organization and DNA protection. The protein is Nucleoid-associated protein SZO_16661 of Streptococcus equi subsp. zooepidemicus (strain H70).